A 147-amino-acid polypeptide reads, in one-letter code: Ribonuclease H (147 aa).

Residues Asp-8, Glu-46, Asp-68, and Asp-132 each contribute to the Mg(2+) site.

Belongs to the RNase H family. Monomer. Requires Mg(2+) as cofactor.

Its subcellular location is the cytoplasm. The enzyme catalyses Endonucleolytic cleavage to 5'-phosphomonoester.. Endonuclease that specifically degrades the RNA of RNA-DNA hybrids. This chain is Ribonuclease H, found in Geotalea uraniireducens (strain Rf4) (Geobacter uraniireducens).